We begin with the raw amino-acid sequence, 226 residues long: MALSDVDVQKQIKHMMAFIEQEANEKAEEIDAKAEEEFNIEKGRLVQTQRLKIMEYYEKKEKQIEQQKKIQMSTLRNQARLKVLRARNDLISELLNDAKLRLSRIVTDPEFYQGLLDKLVLQGLLRLLEPVVIVRCRPQDHFLVEAAVQRAIPQYTAVSHRCVEVQVDKEVQLATDTTGGVEVYSSDQRIMVSNTLESRLDLLSQQKMPEIRKALFGANANRKFFV.

The protein belongs to the V-ATPase E subunit family. V-ATPase is a heteromultimeric enzyme made up of two complexes: the ATP-hydrolytic V1 complex and the proton translocation V0 complex. The V1 complex consists of three catalytic AB heterodimers that form a heterohexamer, three peripheral stalks each consisting of EG heterodimers, one central rotor including subunits D and F, and the regulatory subunits C and H. The proton translocation complex V0 consists of the proton transport subunit a, a ring of proteolipid subunits c9c'', rotary subunit d, subunits e and f, and the accessory subunits ATP6AP1/Ac45 and ATP6AP2/PRR.

Functionally, subunit of the V1 complex of vacuolar(H+)-ATPase (V-ATPase), a multisubunit enzyme composed of a peripheral complex (V1) that hydrolyzes ATP and a membrane integral complex (V0) that translocates protons. V-ATPase is responsible for acidifying and maintaining the pH of intracellular compartments and in some cell types, is targeted to the plasma membrane, where it is responsible for acidifying the extracellular environment. The protein is V-type proton ATPase subunit E 2 (ATP6V1E2) of Bos taurus (Bovine).